The primary structure comprises 86 residues: Anti-adapter protein IraP (86 aa).

The stretch at 1–36 forms a coiled coil; that stretch reads MKNLIAELLFKLAQKEEESKELCAQVEALEIIVTAM.

It belongs to the IraP family. Interacts with RssB.

Its subcellular location is the cytoplasm. Inhibits RpoS proteolysis by regulating RssB activity, thereby increasing the stability of the sigma stress factor RpoS especially during phosphate starvation, but also in stationary phase and during nitrogen starvation. Its effect on RpoS stability is due to its interaction with RssB, which probably blocks the interaction of RssB with RpoS, and the consequent delivery of the RssB-RpoS complex to the ClpXP protein degradation pathway. This Escherichia coli O7:K1 (strain IAI39 / ExPEC) protein is Anti-adapter protein IraP.